An 84-amino-acid chain; its full sequence is Translational regulator CsrA (84 aa).

The protein belongs to the CsrA/RsmA family. Homodimer; the beta-strands of each monomer intercalate to form a hydrophobic core, while the alpha-helices form wings that extend away from the core.

It localises to the cytoplasm. In terms of biological role, a translational regulator that binds mRNA to regulate translation initiation and/or mRNA stability. Usually binds in the 5'-UTR at or near the Shine-Dalgarno sequence preventing ribosome-binding, thus repressing translation. Its main target seems to be the major flagellin gene, while its function is anatagonized by FliW. This chain is Translational regulator CsrA, found in Leptospira borgpetersenii serovar Hardjo-bovis (strain JB197).